Consider the following 168-residue polypeptide: Cell division inhibitor SulA (168 aa).

Residues Ala105–Tyr111 are ftsZ binding.

The protein belongs to the SulA family. In terms of assembly, interacts with FtsZ. Is rapidly cleaved and degraded by the Lon protease once DNA damage is repaired.

Its function is as follows. Component of the SOS system and an inhibitor of cell division. Accumulation of SulA causes rapid cessation of cell division and the appearance of long, non-septate filaments. In the presence of GTP, binds a polymerization-competent form of FtsZ in a 1:1 ratio, thus inhibiting FtsZ polymerization and therefore preventing it from participating in the assembly of the Z ring. This mechanism prevents the premature segregation of damaged DNA to daughter cells during cell division. This chain is Cell division inhibitor SulA, found in Erwinia pyrifoliae (strain DSM 12163 / CIP 106111 / Ep16/96).